We begin with the raw amino-acid sequence, 217 residues long: NADPH-dependent 3-demethoxyubiquinone 3-hydroxylase, mitochondrial (217 aa).

Residues 1–35 (MSCAGAAAAPRLWRLRPGARRSLSAYGRRTSVRFR) constitute a mitochondrion transit peptide. Positions 11–29 (RLWRLRPGARRSLSAYGRR) are required for nuclear localization. A run of 2 repeats spans residues 48–129 (AVDR…TALL) and 130–217 (GKEG…SERL). Residues 48–217 (AVDRIIRVDH…RVAIYLSERL (170 aa)) form a 2 X approximate tandem repeats region. R51 lines the NADH pocket. The Fe cation site is built by E60, E90, H93, E142, E178, and H181. The NADH site is built by Y212 and R216.

It belongs to the COQ7 family. As to quaternary structure, component of a multi-subunit COQ enzyme complex. Interacts with COQ8B and COQ6. Interacts with COQ9. Fe cation is required as a cofactor. Expressed dominantly in heart and skeletal muscle.

It is found in the mitochondrion inner membrane. The protein localises to the mitochondrion. The protein resides in the nucleus. Its subcellular location is the chromosome. The catalysed reaction is a 5-methoxy-2-methyl-3-(all-trans-polyprenyl)benzoquinone + NADH + O2 = a 3-demethylubiquinone + NAD(+) + H2O. Its pathway is cofactor biosynthesis; ubiquinone biosynthesis. Catalyzes the hydroxylation of the 5-methoxy-2-methyl-3-(all-trans-polyprenyl)benzoquinone at the C6 position and participates in the biosynthesis of ubiquinone. Catalyzes the reaction through a substrate-mediated reduction pathway, whereby NADH shuttles electrons to 5-methoxy-2-methyl-3-(all-trans-decaprenyl)benzoquinone, which then transfers the electrons to the two Fe(3+) centers. The binding of 5-methoxy-2-methyl-3-(all-trans-polyprenyl)benzoquinone (DMQn) mediates reduction of the diiron center by nicotinamide adenine dinucleotide (NADH) and initiates oxygen activation for subsequent DMQ hydroxylation. The physiological substrates are 5-methoxy-2-methyl-3-(all-trans-nonaprenyl)benzoquinone (DMQ(9)) and 5-methoxy-2-methyl-3-(all-trans-decaprenyl)benzoquinone (DMQ(10)), however in vitro the enzyme does not have any specificity concerning the length of the polyprenyl tail, and accepts tails of various lengths with similar efficiency. Also has a structural role in the COQ enzyme complex, stabilizing other COQ polypeptides. Involved in lifespan determination in a ubiquinone-independent manner. Plays a role in modulating mitochondrial stress responses, acting in the nucleus, perhaps via regulating gene expression, independent of its characterized mitochondrial function in ubiquinone biosynthesis. This is NADPH-dependent 3-demethoxyubiquinone 3-hydroxylase, mitochondrial from Homo sapiens (Human).